The chain runs to 229 residues: HTH-type transcriptional regulator HbdR (229 aa).

An HTH tetR-type domain is found at 20–80; it reads EERRHQIISA…LTLKNVLDTY (61 aa). Residues 43 to 62 constitute a DNA-binding region (H-T-H motif); sequence TILQIAREAKVSTGLIYQYF.

In terms of assembly, homodimer in solution.

With respect to regulation, activity is regulated by the effector molecules 3-hydroxybenzoyl-CoA and benzoyl-CoA, which bind to HbdR, alleviating its repression on the three target promoters and inducing the expression of the hbd genes. Functionally, transcriptional regulator that controls the expression of the hbd cluster, which contains three catabolic operons and is responsible for the anaerobic degradation of 3-hydroxybenzoate. HbdR suppresses the activity of the three catabolic promoters (PhbdN, PhbdE and PhbdH) by binding to a conserved palindromic operator box. In addition, it slightly increases activity of its own promoter (PhbdR). The HbdR-mediated repression of hbd genes may play a crucial biological role in maintaining requisite hydroxybenzoate levels in the cell. The sequence is that of HTH-type transcriptional regulator HbdR from Aromatoleum sp. (strain CIB) (Azoarcus sp. (strain CIB)).